The primary structure comprises 310 residues: Putative S-adenosyl-L-methionine-dependent methyltransferase MUL_4762 (310 aa).

S-adenosyl-L-methionine contacts are provided by residues Asp132 and 161–162; that span reads DL.

The protein belongs to the UPF0677 family.

In terms of biological role, exhibits S-adenosyl-L-methionine-dependent methyltransferase activity. This Mycobacterium ulcerans (strain Agy99) protein is Putative S-adenosyl-L-methionine-dependent methyltransferase MUL_4762.